Consider the following 421-residue polypeptide: Acyl-coenzyme A thioesterase 5 (421 aa).

Residues S232, D326, and H360 each act as charge relay system in the active site. The Microbody targeting signal signature appears at 419-421 (AKL).

The protein belongs to the C/M/P thioester hydrolase family. As to expression, highly expressed in spleen, brain, testis and proximal and distal intestine; expressed at low level in the liver.

The protein resides in the peroxisome. The enzyme catalyses hexadecanoyl-CoA + H2O = hexadecanoate + CoA + H(+). It carries out the reaction decanoyl-CoA + H2O = decanoate + CoA + H(+). It catalyses the reaction octanoyl-CoA + H2O = octanoate + CoA + H(+). The catalysed reaction is dodecanoyl-CoA + H2O = dodecanoate + CoA + H(+). The enzyme catalyses tetradecanoyl-CoA + H2O = tetradecanoate + CoA + H(+). It carries out the reaction octadecanoyl-CoA + H2O = octadecanoate + CoA + H(+). It catalyses the reaction eicosanoyl-CoA + H2O = eicosanoate + CoA + H(+). The catalysed reaction is (9Z)-octadecenoyl-CoA + H2O = (9Z)-octadecenoate + CoA + H(+). The enzyme catalyses (9Z,12Z)-octadecadienoyl-CoA + H2O = (9Z,12Z)-octadecadienoate + CoA + H(+). It carries out the reaction (5Z,8Z,11Z,14Z)-eicosatetraenoyl-CoA + H2O = (5Z,8Z,11Z,14Z)-eicosatetraenoate + CoA + H(+). It catalyses the reaction (9Z)-hexadecenoyl-CoA + H2O = (9Z)-hexadecenoate + CoA + H(+). Its pathway is lipid metabolism; fatty acid metabolism. Catalyzes the hydrolysis of acyl-CoAs into free fatty acids and coenzyme A (CoASH), regulating their respective intracellular levels. Mainly active on medium-chain acyl-CoAs. Seems to be involved in intraperoxisomal regulation of acyl-CoA levels, but not CoASH levels. May have a function in termination of beta-oxidation of fatty acids. This Mus musculus (Mouse) protein is Acyl-coenzyme A thioesterase 5 (Acot5).